A 266-amino-acid polypeptide reads, in one-letter code: N-acetyltransferase ECO1 (266 aa).

A CCHH-type zinc finger spans residues 31-55; the sequence is KKCTECQMSYIIDSPADCAEHKKYH. The N-acetyltransferase domain occupies 108-266; that stretch reads TPGKTAEVKA…SGELLIPCYI (159 aa).

It belongs to the acetyltransferase family. ECO subfamily.

It localises to the nucleus. Functionally, probable acetyltransferase required for the establishment of sister chromatid cohesion and couple the processes of cohesion and DNA replication to ensure that only sister chromatids become paired together. In contrast to the structural cohesins, the deposition and establishment factors are required only during S phase. Acts by acetylating the cohesin complex component SMC3. In Eremothecium gossypii (strain ATCC 10895 / CBS 109.51 / FGSC 9923 / NRRL Y-1056) (Yeast), this protein is N-acetyltransferase ECO1 (ECO1).